We begin with the raw amino-acid sequence, 351 residues long: Biotin synthase (351 aa).

One can recognise a Radical SAM core domain in the interval 42–269 (NEVQVSTLLS…KSHVRLSAGR (228 aa)). Residues cysteine 57, cysteine 61, and cysteine 64 each contribute to the [4Fe-4S] cluster site. Residues cysteine 101, cysteine 132, cysteine 192, and arginine 264 each contribute to the [2Fe-2S] cluster site.

This sequence belongs to the radical SAM superfamily. Biotin synthase family. As to quaternary structure, homodimer. The cofactor is [4Fe-4S] cluster. It depends on [2Fe-2S] cluster as a cofactor.

The catalysed reaction is (4R,5S)-dethiobiotin + (sulfur carrier)-SH + 2 reduced [2Fe-2S]-[ferredoxin] + 2 S-adenosyl-L-methionine = (sulfur carrier)-H + biotin + 2 5'-deoxyadenosine + 2 L-methionine + 2 oxidized [2Fe-2S]-[ferredoxin]. It participates in cofactor biosynthesis; biotin biosynthesis; biotin from 7,8-diaminononanoate: step 2/2. In terms of biological role, catalyzes the conversion of dethiobiotin (DTB) to biotin by the insertion of a sulfur atom into dethiobiotin via a radical-based mechanism. The sequence is that of Biotin synthase from Psychromonas ingrahamii (strain DSM 17664 / CCUG 51855 / 37).